The following is a 366-amino-acid chain: E3 ubiquitin-protein ligase SINA-like 1 (366 aa).

The tract at residues 1–37 is disordered; the sequence is MVKGTNAEQALAREEASSSRPKRQRVPSIVEEEGENG. The RING-type; degenerate zinc finger occupies 56 to 92; it reads CPICCNALTIPIFQCDKGHIACSSCCTNVSNKCPYCS. Positions 106 to 354 are SBD; it reads VVEAFIVRCP…KGTYICIRSL (249 aa). An SIAH-type; degenerate zinc finger spans residues 109-232; sequence AFIVRCPIVA…LYSHYAANHK (124 aa). Zn(2+) is bound by residues Cys114, Cys186, His198, Cys202, Cys209, Cys214, His226, and His231.

The protein belongs to the SINA (Seven in absentia) family.

It carries out the reaction S-ubiquitinyl-[E2 ubiquitin-conjugating enzyme]-L-cysteine + [acceptor protein]-L-lysine = [E2 ubiquitin-conjugating enzyme]-L-cysteine + N(6)-ubiquitinyl-[acceptor protein]-L-lysine.. Its pathway is protein modification; protein ubiquitination. In terms of biological role, E3 ubiquitin-protein ligase that mediates ubiquitination and subsequent proteasomal degradation of target proteins. E3 ubiquitin ligases accept ubiquitin from an E2 ubiquitin-conjugating enzyme in the form of a thioester and then directly transfers the ubiquitin to targeted substrates. It probably triggers the ubiquitin-mediated degradation of different substrates. The chain is E3 ubiquitin-protein ligase SINA-like 1 from Arabidopsis thaliana (Mouse-ear cress).